Consider the following 393-residue polypeptide: NAD(P)H-quinone oxidoreductase subunit H, chloroplastic (393 aa).

It belongs to the complex I 49 kDa subunit family. As to quaternary structure, NDH is composed of at least 16 different subunits, 5 of which are encoded in the nucleus.

The protein localises to the plastid. Its subcellular location is the chloroplast thylakoid membrane. It catalyses the reaction a plastoquinone + NADH + (n+1) H(+)(in) = a plastoquinol + NAD(+) + n H(+)(out). The enzyme catalyses a plastoquinone + NADPH + (n+1) H(+)(in) = a plastoquinol + NADP(+) + n H(+)(out). NDH shuttles electrons from NAD(P)H:plastoquinone, via FMN and iron-sulfur (Fe-S) centers, to quinones in the photosynthetic chain and possibly in a chloroplast respiratory chain. The immediate electron acceptor for the enzyme in this species is believed to be plastoquinone. Couples the redox reaction to proton translocation, and thus conserves the redox energy in a proton gradient. The protein is NAD(P)H-quinone oxidoreductase subunit H, chloroplastic of Barbarea verna (Land cress).